Consider the following 463-residue polypeptide: Rop guanine nucleotide exchange factor 4 (463 aa).

Disordered regions lie at residues Met1–Thr25 and Gly55–Asp87. Positions Asp59–Lys68 are enriched in acidic residues. The segment covering Asp69 to Asp78 has biased composition (basic and acidic residues). Residues Ser84–Asp463 form the PRONE domain.

In terms of assembly, interacts with ARAC10/ROP11. As to expression, expressed in root vascular tissue and trichoblast cell files. Expressed in root metaxylem cell files. Expressed in guard cells of cotyledons, rosette leaves, sepals, petal, stigmas and siliques. Expressed in root metaxylem cell files.

It localises to the cytoplasm. Its subcellular location is the cell membrane. Functionally, guanine-nucleotide exchange factor (GEF) that acts as an activator of Rop (Rho of plants) GTPases by promoting the exchange of GDP for GTP. In association with ROPGEF1, acts as a specific regulator of ARAC10/ROP11 function in ABA-mediated stomatal closure. The protein is Rop guanine nucleotide exchange factor 4 (ROPGEF4) of Arabidopsis thaliana (Mouse-ear cress).